A 643-amino-acid polypeptide reads, in one-letter code: Tigger transposable element-derived protein 5 (643 aa).

A disordered region spans residues 1 to 50 (MYSAGPPAVPAPRRCRRPPPGRPMQPPRPPAPAPVPAARPPPPAPGPRPR). Residues 20–48 (PGRPMQPPRPPAPAPVPAARPPPPAPGPR) are compositionally biased toward pro residues. The 52-residue stretch at 52–103 (AVKMAFRKAYSIKDKLQAIERVKGGERQASVCRDFGVPGGTLRGWLKDEPKL) folds into the HTH psq-type domain. 2 DNA-binding regions (H-T-H motif) span residues 79 to 99 (QASV…WLKD) and 150 to 183 (PLIQ…WQKR). The HTH CENPB-type domain maps to 117–190 (QRKKMRLANE…QKRHGISSQR (74 aa)). Positions 197–236 (PVAAGPAPGPPVKQEPAQPTRAGPLPDRAASTPAPAEGGY) are disordered. The DDE-1 domain maps to 238 to 358 (DEQIYNANVT…LQQKAVLLVA (121 aa)). The disordered stretch occupies residues 366–395 (EARMPALEESEETRRRCRPEPTGPPEELQT).

Belongs to the tigger transposable element derived protein family.

It is found in the nucleus. In Bos taurus (Bovine), this protein is Tigger transposable element-derived protein 5 (TIGD5).